The following is a 159-amino-acid chain: 2-C-methyl-D-erythritol 2,4-cyclodiphosphate synthase (159 aa).

Residues aspartate 8 and histidine 10 each coordinate a divalent metal cation. Residues 8–10 (DVH) and 34–35 (HS) each bind 4-CDP-2-C-methyl-D-erythritol 2-phosphate. Position 42 (histidine 42) interacts with a divalent metal cation. Residues 56 to 58 (DIG), 61 to 65 (FPDTD), 100 to 106 (AQAPKML), 132 to 135 (TTTE), phenylalanine 139, and arginine 142 contribute to the 4-CDP-2-C-methyl-D-erythritol 2-phosphate site.

It belongs to the IspF family. In terms of assembly, homotrimer. Requires a divalent metal cation as cofactor.

It carries out the reaction 4-CDP-2-C-methyl-D-erythritol 2-phosphate = 2-C-methyl-D-erythritol 2,4-cyclic diphosphate + CMP. The protein operates within isoprenoid biosynthesis; isopentenyl diphosphate biosynthesis via DXP pathway; isopentenyl diphosphate from 1-deoxy-D-xylulose 5-phosphate: step 4/6. Functionally, involved in the biosynthesis of isopentenyl diphosphate (IPP) and dimethylallyl diphosphate (DMAPP), two major building blocks of isoprenoid compounds. Catalyzes the conversion of 4-diphosphocytidyl-2-C-methyl-D-erythritol 2-phosphate (CDP-ME2P) to 2-C-methyl-D-erythritol 2,4-cyclodiphosphate (ME-CPP) with a corresponding release of cytidine 5-monophosphate (CMP). The sequence is that of 2-C-methyl-D-erythritol 2,4-cyclodiphosphate synthase from Salmonella choleraesuis (strain SC-B67).